The chain runs to 322 residues: MYQPPEASCWTGRVDSVSDERAFRLHQRIRLLDLSGPLTPLEQAAAFIGFVCDEGVRRNQGRQGAKEAPAAVKAALARLPWHLPSGASIYDAGDIVCADGRLEQSQAELGKAIARLLQSGVAPVVIGGGHETAYGHYLGVRAALGPNARLGIINIDAHFDLRPYDNGPTSGTMFRQILDEDKQVGYCCLGIQRLGNTAALFADAERYGCEYILEEQLTAGAIEAAYERIEQFASRHDSVILTICMDAISAAAAPGVSAPSPFGLSPSLARALIRRIVSHPKTISVDLCEVNPLVDEGGKTVALAAAFCMEALLHFRRLQPRR.

The Mn(2+) site is built by H130, D156, H158, D160, C244, and D246.

The protein belongs to the arginase family. It depends on Mn(2+) as a cofactor.

The enzyme catalyses N-formimidoyl-L-glutamate + H2O = formamide + L-glutamate. The protein operates within amino-acid degradation; L-histidine degradation into L-glutamate; L-glutamate from N-formimidoyl-L-glutamate (hydrolase route): step 1/1. Functionally, catalyzes the conversion of N-formimidoyl-L-glutamate to L-glutamate and formamide. This chain is Formimidoylglutamase, found in Geobacillus thermodenitrificans (strain NG80-2).